A 504-amino-acid polypeptide reads, in one-letter code: DnaJ homolog subfamily C member 3 (504 aa).

Positions 1 to 31 (MVAPGSVTSRLGSVFPFLLVLVDLQYEGAEC) are cleaved as a signal peptide. TPR repeat units follow at residues 37-70 (VEKH…DPDN), 72-104 (IAYY…KMDF), 105-138 (TAAR…NPSE), 154-187 (MQRL…CVWD), 189-221 (ELRE…KNDN), 222-255 (TEAF…DQDH), 268-301 (LNKL…EPGV), 306-339 (IRSK…EPDN), and 340-373 (VNAL…NEND). An intrachain disulfide couples C248 to C258. S274 is subject to Phosphoserine. An intrachain disulfide couples C313 to C329. Residues 375 to 393 (QIREGLEKAQRLLKQSQRR) are flexible linker. One can recognise a J domain in the interval 394–462 (DYYKILGVKR…EMRKKFDDGE (69 aa)). The disordered stretch occupies residues 451 to 481 (DPEMRKKFDDGEDPLDAESQQGGGGNPFHRS).

Interacts with EIF2AK4/GCN2; this interaction occurs under endoplasmic reticulum (ER) stress, hypothermic and amino acid starving stress conditions and inhibits EIF2AK4/GCN2 kinase activity. Interacts with EIF2AK3. Interacts with EIF2AK2. Forms a trimeric complex with DNAJB1 and HSPA8. Interacts with THAP12.

Its subcellular location is the endoplasmic reticulum. Involved in the unfolded protein response (UPR) during endoplasmic reticulum (ER) stress. Acts as a negative regulator of the EIF2AK4/GCN2 kinase activity by preventing the phosphorylation of eIF-2-alpha at 'Ser-52' and hence attenuating general protein synthesis under ER stress, hypothermic and amino acid starving stress conditions. Co-chaperone of HSPA8/HSC70, it stimulates its ATPase activity. May inhibit both the autophosphorylation of EIF2AK2/PKR and the ability of EIF2AK2 to catalyze phosphorylation of the EIF2A. May inhibit EIF2AK3/PERK activity. The polypeptide is DnaJ homolog subfamily C member 3 (DNAJC3) (Bos taurus (Bovine)).